The sequence spans 114 residues: Hydrogenase maturation factor HypA (114 aa).

Residue His2 coordinates Ni(2+). Zn(2+)-binding residues include Cys73, Cys76, Cys89, and Cys92.

It belongs to the HypA/HybF family.

Involved in the maturation of [NiFe] hydrogenases. Required for nickel insertion into the metal center of the hydrogenase. This Azoarcus sp. (strain BH72) protein is Hydrogenase maturation factor HypA.